A 215-amino-acid chain; its full sequence is MPAFNRLFPLVSLVLIYWASVCFPVCVEVPSETEAVQGNPMKLRCISCMKREEVEATTVVEWFYRPEGGKDFLIYEYRNGHQEVESPFQGRLQWNGSKDLQDVSITVLNVTLNDSGLYTCNVSREFEFEAHRPFVKTTRLIPLRVTEEAGEDFTSVVSEIMMYILLVFLTLWLLIEMIYCYRKVSKAEEAAQENASDYLAIPSENKENSAVPVEE.

The N-terminal stretch at 1–22 is a signal peptide; sequence MPAFNRLFPLVSLVLIYWASVC. Residues 23-156 are Extracellular-facing; that stretch reads FPVCVEVPSE…EEAGEDFTSV (134 aa). The Ig-like C2-type domain maps to 24-138; the sequence is PVCVEVPSET…EAHRPFVKTT (115 aa). 2 disulfides stabilise this stretch: Cys-26-Cys-48 and Cys-45-Cys-120. 4 N-linked (GlcNAc...) asparagine glycosylation sites follow: Asn-95, Asn-109, Asn-113, and Asn-121. The helical transmembrane segment at 157–178 threads the bilayer; the sequence is VSEIMMYILLVFLTLWLLIEMI. Residues 179–215 are Cytoplasmic-facing; sequence YCYRKVSKAEEAAQENASDYLAIPSENKENSAVPVEE.

Belongs to the sodium channel auxiliary subunit SCN3B (TC 8.A.17) family. As to quaternary structure, a voltage-gated sodium (Nav) channel consists of an ion-conducting pore-forming alpha subunit functional on its own that is regulated by one or more beta subunits. Forms homodimers and homotrimers. SCN3B is non-covalently associated with alpha subunits and induces the formation of alpha subunit oligomers, including trimers. Interacts with SCN5A/Nav1.5; regulatory subunit of SCN5A/Nav1.5. Interacts with SCN7A/Nav2.1; probable regulatory subunit of SCN7A/Nav2.1. Interacts with SCN10A; regulatory subunit of SCN10A/Nav1.8. Interacts with NFASC; probably involved in targeting the sodium channels to the nodes of Ranvier. Intramolecular disulfide bonds favor the voltage-gated sodium channel oligomeric complex assembly. Post-translationally, N-glycosylated.

The protein localises to the cell membrane. Regulatory subunit of multiple voltage-gated sodium (Nav) channels directly mediating the depolarization of excitable membranes. Navs, also called VGSCs (voltage-gated sodium channels) or VDSCs (voltage-dependent sodium channels), operate by switching between closed and open conformations depending on the voltage difference across the membrane. In the open conformation they allow Na(+) ions to selectively pass through the pore, along their electrochemical gradient. The influx of Na+ ions provokes membrane depolarization, initiating the propagation of electrical signals throughout cells and tissues. The accessory beta subunits participate in localization and functional modulation of the Nav channels. Modulates the activity of SCN2A/Nav1.2, causing a hyperpolarizing shift in the voltage-dependence of inactivation of the channel and increasing the fraction of channels operating in the fast gating mode. Modulates the activity of SCN5A/Nav1.5. Could also regulate the atypical sodium channel SCN7A/Nav2.1. Modulates the activity of SCN10A/Nav1.8, regulating its oligomerization and accelerating the recovery from inactivation. The protein is Sodium channel regulatory subunit beta-3 of Macaca fascicularis (Crab-eating macaque).